The primary structure comprises 406 residues: Phosphopentomutase (406 aa).

6 residues coordinate Mn(2+): D10, D305, H310, D346, H347, and H358.

The protein belongs to the phosphopentomutase family. The cofactor is Mn(2+).

Its subcellular location is the cytoplasm. The catalysed reaction is 2-deoxy-alpha-D-ribose 1-phosphate = 2-deoxy-D-ribose 5-phosphate. It carries out the reaction alpha-D-ribose 1-phosphate = D-ribose 5-phosphate. Its pathway is carbohydrate degradation; 2-deoxy-D-ribose 1-phosphate degradation; D-glyceraldehyde 3-phosphate and acetaldehyde from 2-deoxy-alpha-D-ribose 1-phosphate: step 1/2. Functionally, isomerase that catalyzes the conversion of deoxy-ribose 1-phosphate (dRib-1-P) and ribose 1-phosphate (Rib-1-P) to deoxy-ribose 5-phosphate (dRib-5-P) and ribose 5-phosphate (Rib-5-P), respectively. This is Phosphopentomutase from Vibrio campbellii (strain ATCC BAA-1116).